Consider the following 1053-residue polypeptide: Serine/threonine-protein phosphatase 6 regulatory ankyrin repeat subunit A (1053 aa).

27 ANK repeats span residues 40 to 69, 73 to 102, 106 to 135, 139 to 168, 172 to 201, 205 to 234, 238 to 267, 271 to 301, 305 to 334, 338 to 367, 371 to 400, 404 to 433, 437 to 466, 470 to 500, 504 to 534, 549 to 578, 582 to 611, 616 to 645, 652 to 681, 685 to 714, 718 to 747, 755 to 786, 788 to 817, 822 to 851, 855 to 885, 889 to 918, and 925 to 954; these read EKRT…RVNA, KWLT…DVNA, NWQT…NVNV, AGRT…NINA, KDRR…EVTC, KSYT…DMNE, YGNT…NVNQ, KGFT…DVNM, DGKT…VIDC, NGNT…DTAK, HGMF…DIDT, FGRT…DFNK, FGRS…SVND, RGCT…NPGI, QGYN…DVLM, ATIS…DLDV, SGRT…SILV, LKRT…PQNA, NGQT…NVDA, WGRT…KCLL, RGRT…SVDA, HGYT…KIDG, AFSP…SIVN, KGRT…QVNS, TGKT…DLTL, SKNT…DRNL, and ALQT…SVLA. A phosphoserine mark is found at S1007 and S1011.

As to quaternary structure, protein phosphatase 6 (PP6) holoenzyme is proposed to be a heterotrimeric complex formed by the catalytic subunit, a SAPS domain-containing subunit (PP6R) and an ankyrin repeat-domain containing regulatory subunit (ARS). Interacts with PPP1C and HNRPK. Interacts with PPP6C, PPP6R1 and PPP6R3. In terms of processing, ubiquitinated by the ECS(RAB40C) complex leading to its degradation and decreased PP6 activity. Widely expressed (at protein level).

It is found in the nucleus. The protein resides in the nucleoplasm. It localises to the cytoplasm. The protein localises to the cytosol. Its subcellular location is the cell projection. It is found in the lamellipodium. Putative regulatory subunit of protein phosphatase 6 (PP6) that may be involved in the recognition of phosphoprotein substrates. Involved in the PP6-mediated dephosphorylation of NFKBIE opposing its degradation in response to TNF-alpha. Selectively inhibits the phosphatase activity of PPP1C. Targets PPP1C to modulate HNRPK phosphorylation. Involved in the PP6-mediated dephosphorylation of MOB1 and induced focal adhesion assembly during cell migration. This chain is Serine/threonine-protein phosphatase 6 regulatory ankyrin repeat subunit A (Ankrd28), found in Mus musculus (Mouse).